Reading from the N-terminus, the 67-residue chain is Conotoxin TsMMSK-B022 (67 aa).

Positions 1–22 (MMSKLGVLLTICLLLFPLTAVS) are cleaved as a signal peptide. Residues 23-50 (LDGDQPADLPELRAQDFAPERSPWFDPV) constitute a propeptide that is removed on maturation. 3 disulfides stabilise this stretch: Cys53–Cys65, Cys54–Cys61, and Cys58–Cys64. The residue at position 63 (Pro63) is a 4-hydroxyproline.

It belongs to the conotoxin M superfamily. In terms of tissue distribution, expressed by the venom duct.

It localises to the secreted. This is Conotoxin TsMMSK-B022 from Conus tessulatus (Tessellate cone).